We begin with the raw amino-acid sequence, 629 residues long: Natural resistance-associated macrophage protein 2 homolog (629 aa).

Residues 1-151 (MNNNNNNKKL…KSKFSIKKLK (151 aa)) lie on the Cytoplasmic side of the membrane. The segment at 50–119 (NVVNGSIEDS…SDIDSSGDSI (70 aa)) is disordered. A compositionally biased stretch (low complexity) spans 62 to 85 (QQQQQQQQQQQQQQQQQQQQQQQQ). Positions 96 to 105 (DKPFQDRDSN) are enriched in basic and acidic residues. Low complexity predominate over residues 106-118 (IGDGSDIDSSGDS). Residues 152–172 (SFLGPALFISVGYMDPGNWAT) form a helical membrane-spanning segment. Over 173–182 (DLEGGSRFGY) the chain is Extracellular. Residues 183 to 203 (QLMWVLLFSNIMALFLQTLVI) form a helical membrane-spanning segment. Residues 204–224 (KLALVTKNDLAQQCRKEYSKT) lie on the Cytoplasmic side of the membrane. A helical membrane pass occupies residues 225 to 245 (VNIFLWLILELAIISTDLAEV). Topologically, residues 246–253 (IGTAIGLN) are extracellular. The chain crosses the membrane as a helical span at residues 254–274 (ILFGLPLIAGVAITSLDTLLF). The Cytoplasmic portion of the chain corresponds to 275–286 (LAIQRWGIRKLE). Residues 287–307 (LLILLLLSMITMCFVIELFLS) form a helical membrane-spanning segment. Topologically, residues 308 to 326 (KPIASEVFSGFVPRLNSDS) are extracellular. Residues 327 to 347 (VMVATGIVGATTMPHNLFLHG) traverse the membrane as a helical segment. Residues 348-376 (SVVKSRKIPNDRRKSVIKQAYRYNVIDTV) are Cytoplasmic-facing. A helical membrane pass occupies residues 377-397 (LALNCAFFVNIAILMLAASVF). Over 398 to 421 (WKSNIQVTELSEAYRLLTKLMDGK) the chain is Extracellular. A helical transmembrane segment spans residues 422 to 442 (LAAVLFGLGLFLAGQSSTITG). At 443–468 (TMAGQIVMEGFIKLRIKPWLRRFITR) the chain is on the cytoplasmic side. The chain crosses the membrane as a helical span at residues 469-489 (LLAIIPAAIVIIVLGDKGTYT). The Extracellular segment spans residues 490-491 (LL). The chain crosses the membrane as a helical span at residues 492–512 (IISQVLLSIGLPFAVVPLIIF). At 513 to 527 (TSSYEIMGEFKNRLS) the chain is on the cytoplasmic side. The chain crosses the membrane as a helical span at residues 528-548 (IIIINSIIALFIIGLNLATIF). At 549-565 (QLINDFLHNDSIISKCL) the chain is on the extracellular side. N557 is a glycosylation site (N-linked (GlcNAc...) asparagine). A helical membrane pass occupies residues 566 to 586 (TIIFLIPLSIALCCLLLWLII). At 587-629 (SKINFFTNLLSKIFNNNNNNNNKNIINNNNNYSGNTINNQTIQ) the chain is on the cytoplasmic side.

Belongs to the NRAMP family.

It localises to the cell membrane. Its function is as follows. Divalent transition metal (iron and manganese) transporter. The polypeptide is Natural resistance-associated macrophage protein 2 homolog (nramp2) (Dictyostelium discoideum (Social amoeba)).